The following is a 183-amino-acid chain: MGLEIVVKDIQEGARAEVSRIKAEGDAKASEIINEAKEIQKKTLGDSLAKAEEDLQSLHQQVISSANLEVKRITLNKRKELLDTVYNQTVENIKSMPASKKEELLKSILDKHEASGARAYSSKESEELVKKLTSLSYAGNIDSIGGIVLENEDRTVRLDFTYDSILKSVYERSLKQISDILYG.

It belongs to the V-ATPase E subunit family. Has multiple subunits, A(3), B(3), C, D, E, F, G, I and K(x); there may be a few other subunits as well.

The protein resides in the cell membrane. In terms of biological role, component of the A-type ATP synthase that produces ATP from ADP in the presence of a proton gradient across the membrane. This is A-type ATP synthase subunit E from Methanosarcina mazei (strain ATCC BAA-159 / DSM 3647 / Goe1 / Go1 / JCM 11833 / OCM 88) (Methanosarcina frisia).